Reading from the N-terminus, the 293-residue chain is Putative ribose uptake protein RbsU (293 aa).

10 consecutive transmembrane segments (helical) span residues 5-24 (ALLIGLGPLIGWGFFPTVAS), 34-51 (IIGATVGTLIFAIILAVV), 58-80 (TGTNLLFALLSGAGWGFGQIITF), 95-114 (TTAFQLLGASLWGVFALGNW), 121-138 (IIGFTALVVILIGARMTV), 153-170 (RAVVLLLIGEFGYWLYSA), 177-199 (IDGLTAFLPQAMGMVIVAVIYGF), 212-234 (ITWLQIISGFFFAFGALTYLISA), 241-263 (LATGFILSQTSVVLATLTGIYFL), and 273-292 (VITIIGLVLILVAASVTVFI).

Belongs to the GRP transporter (TC 2.A.7.5) family.

It is found in the cell membrane. Could be involved in the uptake of ribose. This is Putative ribose uptake protein RbsU (rbsU) from Staphylococcus aureus (strain COL).